A 300-amino-acid chain; its full sequence is Ribosomal RNA small subunit methyltransferase H (300 aa).

S-adenosyl-L-methionine-binding positions include 46 to 48 (GGH), D65, F92, D107, and Q114.

Belongs to the methyltransferase superfamily. RsmH family.

It is found in the cytoplasm. The enzyme catalyses cytidine(1402) in 16S rRNA + S-adenosyl-L-methionine = N(4)-methylcytidine(1402) in 16S rRNA + S-adenosyl-L-homocysteine + H(+). Functionally, specifically methylates the N4 position of cytidine in position 1402 (C1402) of 16S rRNA. The chain is Ribosomal RNA small subunit methyltransferase H from Prochlorococcus marinus (strain MIT 9312).